Consider the following 141-residue polypeptide: Cystatin-SN (141 aa).

Residues 1–20 (MAQYLSTLLLLLATLAVALA) form the signal peptide. Positions 76-80 (QTVGG) match the Secondary area of contact motif. Disulfide bonds link C94/C104 and C118/C138.

The protein belongs to the cystatin family. As to expression, expressed in submandibular and sublingual saliva but not in parotid saliva (at protein level). Expressed in saliva, tears, urine and seminal fluid.

The protein localises to the secreted. In terms of biological role, human saliva appears to contain several cysteine proteinase inhibitors that are immunologically related to cystatin S but that differ in their specificity due to amino acid sequence differences. Cystatin SN, with a pI of 7.5, is a much better inhibitor of papain and dipeptidyl peptidase I than is cystatin S, although both inhibit ficin equally well. This chain is Cystatin-SN (CST1), found in Homo sapiens (Human).